The sequence spans 143 residues: Large ribosomal subunit protein uL13 (143 aa).

Belongs to the universal ribosomal protein uL13 family. In terms of assembly, part of the 50S ribosomal subunit.

This protein is one of the early assembly proteins of the 50S ribosomal subunit, although it is not seen to bind rRNA by itself. It is important during the early stages of 50S assembly. The sequence is that of Large ribosomal subunit protein uL13 from Prochlorococcus marinus subsp. pastoris (strain CCMP1986 / NIES-2087 / MED4).